Consider the following 617-residue polypeptide: Estrogen receptor (617 aa).

The tract at residues 1–54 (MSEEQARAEAPAGARQRRRSELEGYSVSLASLKLSPMYPEEEQRTTGGISSTAH) is disordered. Positions 1 to 186 (MSEEQARAEA…AIGLVKEIRY (186 aa)) are modulating. NR C4-type zinc fingers lie at residues 187–207 (CSVC…CEGC) and 223–247 (CPAT…LRKC). Positions 187 to 252 (CSVCSDYASG…RLRKCYEVGM (66 aa)) form a DNA-binding region, nuclear receptor. The segment at 253 to 315 (MKGGFRKERG…GGGVADVVCM (63 aa)) is hinge. The disordered stretch occupies residues 269 to 303 (NRRPSGLKERERGYSKAQSGSDVREALPQDGQSSS). Positions 316–552 (SPEQVLLLLL…DLLLEMLDAH (237 aa)) constitute an NR LBD domain. Residues 568–617 (VSSSPTTTATTPTTNTTTTTTTTTHHPSNGSTCPADLPSNPPGPGQSPSP) are disordered. The segment covering 573-591 (TTTATTPTTNTTTTTTTTT) has biased composition (low complexity). Residues 606 to 617 (SNPPGPGQSPSP) show a composition bias toward pro residues.

It belongs to the nuclear hormone receptor family. NR3 subfamily. As to quaternary structure, binds DNA as a homodimer. Can form a heterodimer with ER-beta. As to expression, ovary and testis.

It is found in the nucleus. Its function is as follows. The steroid hormones and their receptors are involved in the regulation of eukaryotic gene expression and affect cellular proliferation and differentiation in target tissues. This is Estrogen receptor (esr1) from Ictalurus punctatus (Channel catfish).